The chain runs to 76 residues: Conotoxin Am6.3 (76 aa).

Residues 1-22 (MKLTCMMIIAVLFLTAWTFATA) form the signal peptide. Disulfide bonds link cysteine 52/cysteine 67, cysteine 59/cysteine 71, and cysteine 66/cysteine 75.

This sequence belongs to the conotoxin O1 superfamily. Is not hydroxylated. As to expression, expressed by the venom duct.

It is found in the secreted. Probable toxin that inhibits ion channels. This is Conotoxin Am6.3 from Conus amadis (Amadis cone).